A 419-amino-acid chain; its full sequence is MSLLAIGINHNTASVELREKVAFGPEKLSLALNQLSTSSHVKGGVILSTCNRTEIYCDVRSASKNKVIEWLSQFHQVSLDELKPSLYVHEEQAAIRHLMRVACGLDSLVLGEPQILGQVKQAYAEARENHAVNPATEKLFQKAFSVAKRVRTETEIGGSAVSVAYAACTLAKHIFESLADATVLLVGAGETIELVAKHLAGHHCKRMIVANRTRERALSLAQQFGADVIALNEIPDYLAQADIVISSTASPLPIIGKGMVESALKARRHQPMLLVDIAVPRDIEPQVGKLNDAYLYSVDDLQSIVDSNIEQRKVEAIQAEAIVSEESATFMSWMRSLQAVDSIRDYRKQANEAREELLNKSLQALAAGGDPEKLLIELSNKLTNKLIHTPTRALQTAAEQGEPAKLAVIRQSLGLDDLN.

Substrate-binding positions include 49–52 (TCNR), Ser-107, 112–114 (EPQ), and Gln-118. Residue Cys-50 is the Nucleophile of the active site. 187–192 (GAGETI) is an NADP(+) binding site.

Belongs to the glutamyl-tRNA reductase family. In terms of assembly, homodimer.

The catalysed reaction is (S)-4-amino-5-oxopentanoate + tRNA(Glu) + NADP(+) = L-glutamyl-tRNA(Glu) + NADPH + H(+). It functions in the pathway porphyrin-containing compound metabolism; protoporphyrin-IX biosynthesis; 5-aminolevulinate from L-glutamyl-tRNA(Glu): step 1/2. Its function is as follows. Catalyzes the NADPH-dependent reduction of glutamyl-tRNA(Glu) to glutamate 1-semialdehyde (GSA). In Vibrio cholerae serotype O1 (strain ATCC 39541 / Classical Ogawa 395 / O395), this protein is Glutamyl-tRNA reductase.